We begin with the raw amino-acid sequence, 278 residues long: D-aminoacyl-tRNA deacylase (278 aa).

It belongs to the DtdA deacylase family. Monomer. The cofactor is Zn(2+).

It catalyses the reaction a D-aminoacyl-tRNA + H2O = a tRNA + a D-alpha-amino acid + H(+). It carries out the reaction glycyl-tRNA(Ala) + H2O = tRNA(Ala) + glycine + H(+). In terms of biological role, D-aminoacyl-tRNA deacylase with broad substrate specificity. By recycling D-aminoacyl-tRNA to D-amino acids and free tRNA molecules, this enzyme counteracts the toxicity associated with the formation of D-aminoacyl-tRNA entities in vivo. This is D-aminoacyl-tRNA deacylase from Archaeoglobus fulgidus (strain ATCC 49558 / DSM 4304 / JCM 9628 / NBRC 100126 / VC-16).